A 78-amino-acid chain; its full sequence is U-scoloptoxin(04)-Er1b (78 aa).

The signal sequence occupies residues 1-24; it reads MTRHLIFAAVLLVCLFVCWNAVGA. The propeptide occupies 25-28; it reads QDAR.

The protein belongs to the scoloptoxin-04 family. In terms of processing, contains 2 disulfide bonds. Expressed by the venom gland.

Its subcellular location is the secreted. The chain is U-scoloptoxin(04)-Er1b from Ethmostigmus rubripes (Giant centipede).